The primary structure comprises 86 residues: U15-lycotoxin-Ls1c (86 aa).

Residues 1-20 (MNSKIFAVLLLLAFLSCVLS) form the signal peptide. In terms of domain architecture, WAP spans 21–66 (DQYCPKSSITACKKMNIRNDCCKDDDCTGGSWCCATPCGNICKYPT). 5 cysteine pairs are disulfide-bonded: cysteine 24/cysteine 54, cysteine 32/cysteine 58, cysteine 41/cysteine 53, cysteine 42/cysteine 80, and cysteine 47/cysteine 62.

It belongs to the venom protein 11 family. 01 (wap-1) subfamily. Post-translationally, contains 5 disulfide bonds. In terms of tissue distribution, expressed by the venom gland.

The protein localises to the secreted. Its function is as follows. Has antibacterial activity. This chain is U15-lycotoxin-Ls1c, found in Lycosa singoriensis (Wolf spider).